We begin with the raw amino-acid sequence, 363 residues long: MSAIYNFCAGPAMLPAAVMKKAQQELLDWNGQGVSVMEISHRSKEFIALTEQAESDLRELMQIPANYHVLFMHGGGRGQFSAVVNNFLGEQGKALYLVSGQWSSAALAEAQKLAGEAQIDSLNIVEKHNGLNAVVLPDLHKIDADYRYVHYCPNETVDGIEIFDELDSPWPIVADLSSTIMSREIDVSRYGLIYAGAQKNIGPSGLSIVIVRDDMLKLPSLPQSSIMDYRLAVEHDSMFNTPPTFAWYLAAEVFAWLKSTGGISSIAKINQQKAQMLYQCIDGNAFYRNGVVAANRSQMNVTFQLVNEALDSEFLKQAQIAGLVALKGHRIVGGMRASLYNAMPLDGIVALVKFMNEFAAKHS.

Arg42 is an L-glutamate binding site. Pyridoxal 5'-phosphate is bound by residues 76–77 (GR), Trp102, Thr156, Asp175, and Gln198. Lys199 carries the post-translational modification N6-(pyridoxal phosphate)lysine. 240-241 (NT) contributes to the pyridoxal 5'-phosphate binding site.

Belongs to the class-V pyridoxal-phosphate-dependent aminotransferase family. SerC subfamily. In terms of assembly, homodimer. It depends on pyridoxal 5'-phosphate as a cofactor.

It is found in the cytoplasm. The enzyme catalyses O-phospho-L-serine + 2-oxoglutarate = 3-phosphooxypyruvate + L-glutamate. It catalyses the reaction 4-(phosphooxy)-L-threonine + 2-oxoglutarate = (R)-3-hydroxy-2-oxo-4-phosphooxybutanoate + L-glutamate. It participates in amino-acid biosynthesis; L-serine biosynthesis; L-serine from 3-phospho-D-glycerate: step 2/3. Its pathway is cofactor biosynthesis; pyridoxine 5'-phosphate biosynthesis; pyridoxine 5'-phosphate from D-erythrose 4-phosphate: step 3/5. Its function is as follows. Catalyzes the reversible conversion of 3-phosphohydroxypyruvate to phosphoserine and of 3-hydroxy-2-oxo-4-phosphonooxybutanoate to phosphohydroxythreonine. The polypeptide is Phosphoserine aminotransferase (Shewanella baltica (strain OS155 / ATCC BAA-1091)).